A 148-amino-acid chain; its full sequence is Snaclec crotocetin (148 aa).

The first 23 residues, 1 to 23 (MGRLVFVSFGLLVVFLSLTGTGA), serve as a signal peptide directing secretion. Intrachain disulfides connect C27-C38, C55-C144, and C121-C136. In terms of domain architecture, C-type lectin spans 34–145 (YEGHCYKVFK…CSKTHKVVCK (112 aa)).

It belongs to the snaclec family. As to quaternary structure, heterodimer; disulfide-linked. As to expression, expressed by the venom gland.

The protein localises to the secreted. Functionally, interferes with one step of hemostasis (modulation of platelet aggregation, or coagulation cascade, for example). The polypeptide is Snaclec crotocetin (Crotalus durissus terrificus (South American rattlesnake)).